A 372-amino-acid polypeptide reads, in one-letter code: 1,3,6,8-tetrahydroxynaphthalene synthase (372 aa).

The active site involves C138.

The protein belongs to the thiolase-like superfamily. Chalcone/stilbene synthases family. As to quaternary structure, homodimer.

The enzyme catalyses 5 malonyl-CoA + 5 H(+) = naphthalene-1,3,6,8-tetrol + 5 CO2 + 5 CoA + H2O. It functions in the pathway pigment biosynthesis; melanin biosynthesis. Involved in the biosynthesis of melanin but also various secondary metabolites containing a naphthoquinone ring. Catalyzes the iterative condensation of five CoA-linked malonyl units to form a pentaketide intermediate. THNS subsequently catalyzes the dual intramolecular Claisen and aldol condensations of this linear intermediate to produce the fused ring of 1,3,6,8-tetrahydroxynaphthalene (THN). This Streptomyces griseus protein is 1,3,6,8-tetrahydroxynaphthalene synthase.